Consider the following 309-residue polypeptide: Hydroxyacylglutathione hydrolase, mitochondrial (309 aa).

Residues 1–24 (MVLGRGSLCLRSLSVLGAACARRG) constitute a mitochondrion transit peptide. N6-acetyllysine is present on K90. Residues H103, H105, D107, and H108 each coordinate Zn(2+). An N6-acetyllysine modification is found at K117. Positions 159 and 183 each coordinate Zn(2+). Residues 192–194 (KFY) and 222–224 (HEY) contribute to the substrate site. H222 is a Zn(2+) binding site. K230 is modified (N6-acetyllysine; alternate). K230 bears the N6-succinyllysine; alternate mark. 298 to 301 (RREK) provides a ligand contact to substrate.

Belongs to the metallo-beta-lactamase superfamily. Glyoxalase II family. Monomer. Zn(2+) is required as a cofactor. As to expression, strongly expressed in testis, skeletal muscle and heart. Weakly expressed in placenta, pancreas, spleen and peripheral blood leukocytes.

The protein resides in the mitochondrion matrix. The protein localises to the cytoplasm. The enzyme catalyses an S-(2-hydroxyacyl)glutathione + H2O = a 2-hydroxy carboxylate + glutathione + H(+). It catalyses the reaction (R)-S-lactoylglutathione + H2O = (R)-lactate + glutathione + H(+). It participates in secondary metabolite metabolism; methylglyoxal degradation; (R)-lactate from methylglyoxal: step 2/2. Thiolesterase that catalyzes the hydrolysis of S-D-lactoyl-glutathione to form glutathione and D-lactic acid. The chain is Hydroxyacylglutathione hydrolase, mitochondrial (Hagh) from Rattus norvegicus (Rat).